We begin with the raw amino-acid sequence, 624 residues long: Chaperone protein HtpG (624 aa).

Positions 1 to 336 are a; substrate-binding; sequence MNMKGQETRG…SNDLPLNVSR (336 aa). Positions 337–552 are b; the sequence is EILQDSRITQ…ADEMSTQMAK (216 aa). Residues 553 to 624 are c; it reads LFAAAGQQAP…IRRMNQLLTA (72 aa).

The protein belongs to the heat shock protein 90 family. As to quaternary structure, homodimer.

Its subcellular location is the cytoplasm. Functionally, molecular chaperone. Has ATPase activity. This Yersinia pestis bv. Antiqua (strain Antiqua) protein is Chaperone protein HtpG.